An 89-amino-acid polypeptide reads, in one-letter code: Small ribosomal subunit protein uS17 (89 aa).

This sequence belongs to the universal ribosomal protein uS17 family. As to quaternary structure, part of the 30S ribosomal subunit.

In terms of biological role, one of the primary rRNA binding proteins, it binds specifically to the 5'-end of 16S ribosomal RNA. The chain is Small ribosomal subunit protein uS17 from Xanthomonas campestris pv. campestris (strain 8004).